A 166-amino-acid chain; its full sequence is MSGIIEKKKQVVEEIAEKFRASQTAVVVDYRGLDVAEVTALRKELREAGIEFKVYKNTMTRRAVEAVELTDLNDTLTGPTAIAFSNDDVVAPARILNNFKKDHEALEIKGGVIEGQVATLDQIKDLADLPNYEGMVSMLLSVLQAPVRNFAYVTKAVAEQKEEQGA.

Belongs to the universal ribosomal protein uL10 family. Part of the ribosomal stalk of the 50S ribosomal subunit. The N-terminus interacts with L11 and the large rRNA to form the base of the stalk. The C-terminus forms an elongated spine to which L12 dimers bind in a sequential fashion forming a multimeric L10(L12)X complex.

In terms of biological role, forms part of the ribosomal stalk, playing a central role in the interaction of the ribosome with GTP-bound translation factors. The polypeptide is Large ribosomal subunit protein uL10 (Oceanobacillus iheyensis (strain DSM 14371 / CIP 107618 / JCM 11309 / KCTC 3954 / HTE831)).